Here is a 412-residue protein sequence, read N- to C-terminus: 1-deoxy-D-xylulose 5-phosphate reductoisomerase (412 aa).

NADPH contacts are provided by Thr10, Gly11, Ser12, Ile13, Gly36, Lys37, Asn38, and Asn130. Lys131 contributes to the 1-deoxy-D-xylulose 5-phosphate binding site. Glu132 provides a ligand contact to NADPH. Asp156 contributes to the Mn(2+) binding site. 1-deoxy-D-xylulose 5-phosphate is bound by residues Ser157, Glu158, Ser194, and His217. Glu158 lines the Mn(2+) pocket. Gly223 is a binding site for NADPH. 1-deoxy-D-xylulose 5-phosphate-binding residues include Ser230, Asn235, Lys236, and Glu239. A Mn(2+)-binding site is contributed by Glu239.

This sequence belongs to the DXR family. The cofactor is Mg(2+). Requires Mn(2+) as cofactor.

The enzyme catalyses 2-C-methyl-D-erythritol 4-phosphate + NADP(+) = 1-deoxy-D-xylulose 5-phosphate + NADPH + H(+). Its pathway is isoprenoid biosynthesis; isopentenyl diphosphate biosynthesis via DXP pathway; isopentenyl diphosphate from 1-deoxy-D-xylulose 5-phosphate: step 1/6. Functionally, catalyzes the NADPH-dependent rearrangement and reduction of 1-deoxy-D-xylulose-5-phosphate (DXP) to 2-C-methyl-D-erythritol 4-phosphate (MEP). The sequence is that of 1-deoxy-D-xylulose 5-phosphate reductoisomerase from Prochlorococcus marinus (strain NATL2A).